A 370-amino-acid polypeptide reads, in one-letter code: Ribosomal RNA small subunit methyltransferase H (370 aa).

S-adenosyl-L-methionine-binding positions include 85–87 (GGH), D104, Y131, D152, and Q159. Composition is skewed to basic and acidic residues over residues 332–345 (GAERATPEEIERNP) and 353–370 (RALEKVAGRPTTARRDAR). A disordered region spans residues 332-370 (GAERATPEEIERNPRSAPVRLRALEKVAGRPTTARRDAR).

This sequence belongs to the methyltransferase superfamily. RsmH family.

It localises to the cytoplasm. It carries out the reaction cytidine(1402) in 16S rRNA + S-adenosyl-L-methionine = N(4)-methylcytidine(1402) in 16S rRNA + S-adenosyl-L-homocysteine + H(+). Its function is as follows. Specifically methylates the N4 position of cytidine in position 1402 (C1402) of 16S rRNA. This is Ribosomal RNA small subunit methyltransferase H from Mycobacterium sp. (strain KMS).